A 143-amino-acid polypeptide reads, in one-letter code: Large ribosomal subunit protein uL13 (143 aa).

The protein belongs to the universal ribosomal protein uL13 family. Part of the 50S ribosomal subunit.

This protein is one of the early assembly proteins of the 50S ribosomal subunit, although it is not seen to bind rRNA by itself. It is important during the early stages of 50S assembly. The polypeptide is Large ribosomal subunit protein uL13 (Albidiferax ferrireducens (strain ATCC BAA-621 / DSM 15236 / T118) (Rhodoferax ferrireducens)).